The following is a 61-amino-acid chain: MMLIFQIALLVLVLYSLLLVVAVPVLFSSASDWSRAKNVILVGSLLWVLMVIGVGVLSFFK.

A run of 2 helical transmembrane segments spans residues 8–28 (ALLVLVLYSLLLVVAVPVLFS) and 41–61 (LVGSLLWVLMVIGVGVLSFFK).

Belongs to the PsbZ family. PSII is composed of 1 copy each of membrane proteins PsbA, PsbB, PsbC, PsbD, PsbE, PsbF, PsbH, PsbI, PsbJ, PsbK, PsbL, PsbM, PsbT, PsbX, PsbY, PsbZ, Psb30/Ycf12, peripheral proteins PsbO, CyanoQ (PsbQ), PsbU, PsbV and a large number of cofactors. It forms dimeric complexes.

The protein localises to the cellular thylakoid membrane. In terms of biological role, may control the interaction of photosystem II (PSII) cores with the light-harvesting antenna, regulates electron flow through the 2 photosystem reaction centers. PSII is a light-driven water plastoquinone oxidoreductase, using light energy to abstract electrons from H(2)O, generating a proton gradient subsequently used for ATP formation. This Synechococcus sp. (strain JA-3-3Ab) (Cyanobacteria bacterium Yellowstone A-Prime) protein is Photosystem II reaction center protein Z.